Reading from the N-terminus, the 53-residue chain is Large ribosomal subunit protein bL33 (53 aa).

The protein belongs to the bacterial ribosomal protein bL33 family.

The protein is Large ribosomal subunit protein bL33 of Malacoplasma penetrans (strain HF-2) (Mycoplasma penetrans).